We begin with the raw amino-acid sequence, 715 residues long: 1,4-alpha-glucan branching enzyme GlgB (715 aa).

D399 (nucleophile) is an active-site residue. E452 acts as the Proton donor in catalysis.

Belongs to the glycosyl hydrolase 13 family. GlgB subfamily. In terms of assembly, monomer.

The enzyme catalyses Transfers a segment of a (1-&gt;4)-alpha-D-glucan chain to a primary hydroxy group in a similar glucan chain.. It functions in the pathway glycan biosynthesis; glycogen biosynthesis. Functionally, catalyzes the formation of the alpha-1,6-glucosidic linkages in glycogen by scission of a 1,4-alpha-linked oligosaccharide from growing alpha-1,4-glucan chains and the subsequent attachment of the oligosaccharide to the alpha-1,6 position. The chain is 1,4-alpha-glucan branching enzyme GlgB from Rhodopseudomonas palustris (strain BisA53).